The sequence spans 448 residues: Adenylosuccinate synthetase (448 aa).

Residues 22-28 (GDEGKGK) and 50-52 (GHT) contribute to the GTP site. Asp-23 (proton acceptor) is an active-site residue. Residues Asp-23 and Gly-50 each coordinate Mg(2+). IMP-binding positions include 23-26 (DEGK), 48-51 (NAGH), Thr-139, Arg-153, Gln-234, Thr-249, and Arg-321. His-51 acts as the Proton donor in catalysis. 317-323 (SVTGRPR) is a binding site for substrate. Residues Arg-323, 349–351 (KLD), and 431–433 (STG) each bind GTP.

The protein belongs to the adenylosuccinate synthetase family. As to quaternary structure, homodimer. Requires Mg(2+) as cofactor.

Its subcellular location is the cytoplasm. It carries out the reaction IMP + L-aspartate + GTP = N(6)-(1,2-dicarboxyethyl)-AMP + GDP + phosphate + 2 H(+). It functions in the pathway purine metabolism; AMP biosynthesis via de novo pathway; AMP from IMP: step 1/2. Functionally, plays an important role in the de novo pathway of purine nucleotide biosynthesis. Catalyzes the first committed step in the biosynthesis of AMP from IMP. The polypeptide is Adenylosuccinate synthetase (Paraburkholderia phymatum (strain DSM 17167 / CIP 108236 / LMG 21445 / STM815) (Burkholderia phymatum)).